Here is a 427-residue protein sequence, read N- to C-terminus: Adenylosuccinate synthetase (427 aa).

GTP contacts are provided by residues 12-18 (GDEGKGK) and 40-42 (GHT). The Proton acceptor role is filled by Asp13. Asp13 and Gly40 together coordinate Mg(2+). Residues 13-16 (DEGK), 38-41 (NAGH), Thr128, Arg142, Gln223, Thr238, and Arg302 contribute to the IMP site. The Proton donor role is filled by His41. 298 to 304 (TTTGRPR) lines the substrate pocket. GTP is bound by residues Arg304, 330-332 (SID), and 412-414 (SVG).

This sequence belongs to the adenylosuccinate synthetase family. Homodimer. Mg(2+) serves as cofactor.

It localises to the cytoplasm. The catalysed reaction is IMP + L-aspartate + GTP = N(6)-(1,2-dicarboxyethyl)-AMP + GDP + phosphate + 2 H(+). It participates in purine metabolism; AMP biosynthesis via de novo pathway; AMP from IMP: step 1/2. Plays an important role in the de novo pathway of purine nucleotide biosynthesis. Catalyzes the first committed step in the biosynthesis of AMP from IMP. This chain is Adenylosuccinate synthetase, found in Staphylococcus epidermidis (strain ATCC 12228 / FDA PCI 1200).